We begin with the raw amino-acid sequence, 191 residues long: Pentapeptide repeat protein MfpA (191 aa).

Residues 115 to 154 (CRLREVSLVGADLRKAVLRRADLTGSRVQDARLEEADLRG) form the Pentapeptide repeat domain.

It belongs to the pentapeptide repeat protein family. In terms of assembly, homodimer. Probably interacts with DNA gyrase.

Functionally, when present on multicopy plasmids confers increased resistance to fluoroquinolone antibiotics such as ciprofloxacin and sparfloxacin but not the quinolone nalidixic acid. Forms a structure that exhibits size, shape and electrostatic similarity to B-form DNA; it may bind to DNA gyrase which is postulated to protect it from fluoroquinolones. This Mycolicibacterium smegmatis (strain ATCC 700084 / mc(2)155) (Mycobacterium smegmatis) protein is Pentapeptide repeat protein MfpA.